The primary structure comprises 187 residues: UPF0301 protein ECA3925 (187 aa).

Belongs to the UPF0301 (AlgH) family.

The sequence is that of UPF0301 protein ECA3925 from Pectobacterium atrosepticum (strain SCRI 1043 / ATCC BAA-672) (Erwinia carotovora subsp. atroseptica).